An 879-amino-acid polypeptide reads, in one-letter code: Alanine--tRNA ligase (879 aa).

H566, H570, C668, and H672 together coordinate Zn(2+).

It belongs to the class-II aminoacyl-tRNA synthetase family. Zn(2+) is required as a cofactor.

The protein localises to the cytoplasm. It carries out the reaction tRNA(Ala) + L-alanine + ATP = L-alanyl-tRNA(Ala) + AMP + diphosphate. Functionally, catalyzes the attachment of alanine to tRNA(Ala) in a two-step reaction: alanine is first activated by ATP to form Ala-AMP and then transferred to the acceptor end of tRNA(Ala). Also edits incorrectly charged Ser-tRNA(Ala) and Gly-tRNA(Ala) via its editing domain. This is Alanine--tRNA ligase from Clostridium perfringens (strain ATCC 13124 / DSM 756 / JCM 1290 / NCIMB 6125 / NCTC 8237 / Type A).